We begin with the raw amino-acid sequence, 405 residues long: Lariat debranching enzyme (405 aa).

Residues C11, H13, D40, and N85 each contribute to the a divalent metal cation site. Residues 125-159 (SGIWKEWDFNKQRPDWNDLENNNWKANIRNLYHVR) are lariat recognition loop. H179, H231, and H233 together coordinate a divalent metal cation. The disordered stretch occupies residues 242–277 (HNKRSHEPPNKSTSKTKKNNNEIDLDLSSDEDERSG). The span at 264–274 (IDLDLSSDEDE) shows a compositional bias: acidic residues. Residue S269 is modified to Phosphoserine.

Belongs to the lariat debranching enzyme family. Fe(2+) is required as a cofactor. It depends on Zn(2+) as a cofactor. The cofactor is Mn(2+).

It localises to the nucleus. The protein localises to the cytoplasm. With respect to regulation, active in presence of diverse metals including Fe(2+), Zn(2+) and Mn(2+). Binds two metal cations in two adjacent alpha and beta metal-binding pockets. The activity is the highest with Fe(2+) bound to the 2 metal-binding sites. Activity is low with Zn(2+) and Mn(2+). In terms of biological role, cleaves the 2'-5' phosphodiester linkage at the branch point of lariat intron pre-mRNAs after splicing and converts them into linear molecules that are subsequently degraded, thereby facilitating ribonucleotide turnover. It also participates in Ty1 retrovirus-like transposition via an RNA lariat intermediate in cDNA synthesis. The chain is Lariat debranching enzyme (DBR1) from Saccharomyces cerevisiae (strain ATCC 204508 / S288c) (Baker's yeast).